The chain runs to 213 residues: mRNA-decapping protein D9 (213 aa).

The Nudix hydrolase domain maps to 30 to 209 (KDTHVFAACI…EYLSYIYNML (180 aa)). A Nudix box motif is present at residues 111–132 (GKLDKKESIKDCLRRELKEESD). Position 117 (E117) interacts with Mg(2+). Residue E126 is the Nucleophile of the active site. Residues E130 and D151 each coordinate Mg(2+).

It belongs to the Nudix hydrolase family. It depends on Mg(2+) as a cofactor. Mn(2+) serves as cofactor.

Its function is as follows. Decapping enzyme required for the removal of the 5'-end m7GpppN cap tethered to viral and host mRNAs to allow their decay in cells. May therefore accelerate viral and cellular mRNA turnover to eliminate competing host mRNAs and allow stage-specific synthesis of viral proteins. Acceleration of the turnover of cellular transcripts may even promote the shutoff of host protein synthesis. Does not cleave unmethylated RNAs or RNAs shorter than 24 nucleotides. This is mRNA-decapping protein D9 from Homo sapiens (Human).